The chain runs to 145 residues: Probable inactive ribonuclease-like protein 12 (145 aa).

Positions 1–19 are cleaved as a signal peptide; it reads MVLMVVVFLLLLFWENELT.

The protein belongs to the pancreatic ribonuclease family.

It is found in the secreted. Does not exhibit any ribonuclease activity. This chain is Probable inactive ribonuclease-like protein 12 (Rnase12), found in Mus musculus (Mouse).